We begin with the raw amino-acid sequence, 417 residues long: MKFVIESLTKNSGRLGRLHIKDGAPGQRTPLLMQTTKGGSIPYLSADVFESHVTETPQLLELTLSTIDHMSEALAQWNSADRGLSDYIGFPGHLNVLLLRDPCETTPAGGNDRDIQPLFTRRGKESLSAQRYMEMVASLRPDIYQGLCDADTNAESAKKRVQKSVDRTEKFMHYIYEHKSKVDSTLLAPIVGGYNTFARTQSIKHALEQPSGSYGGYVFEGFHTNGLSATILDASKLLPIVEHCVGQLEEEKPRMVPGAYTPLTTLELIGLGMDLFDTSYAYCAAVNFKALTFTFVQDEVVHVPLLDITDDAIKEDFSPLLKNCDCLSCQKHTRAYVHHLYKTNELLGPILLMVHNLHHYMAFFEAIRESIARDGLPQLTELVRRQNGDSQVDYSIAPNRKVISKATMGKGFAAAAV.

The Zn(2+) site is built by cysteine 324, cysteine 326, cysteine 329, and histidine 355.

It belongs to the queuine tRNA-ribosyltransferase family. QTRT2 subfamily. Heterodimer of a catalytic subunit and an accessory subunit. Requires Zn(2+) as cofactor.

It localises to the cytoplasm. Non-catalytic subunit of the queuine tRNA-ribosyltransferase (TGT) that catalyzes the base-exchange of a guanine (G) residue with queuine (Q) at position 34 (anticodon wobble position) in tRNAs with GU(N) anticodons (tRNA-Asp, -Asn, -His and -Tyr), resulting in the hypermodified nucleoside queuosine (7-(((4,5-cis-dihydroxy-2-cyclopenten-1-yl)amino)methyl)-7-deazaguanosine). This Drosophila pseudoobscura pseudoobscura (Fruit fly) protein is Queuine tRNA-ribosyltransferase accessory subunit 2.